Reading from the N-terminus, the 428-residue chain is Enolase (428 aa).

Position 163 (Q163) interacts with (2R)-2-phosphoglycerate. E205 serves as the catalytic Proton donor. Residues D242, E285, and D312 each contribute to the Mg(2+) site. K337, R366, S367, and K388 together coordinate (2R)-2-phosphoglycerate. K337 (proton acceptor) is an active-site residue.

Belongs to the enolase family. Requires Mg(2+) as cofactor.

It is found in the cytoplasm. It localises to the secreted. The protein resides in the cell surface. The enzyme catalyses (2R)-2-phosphoglycerate = phosphoenolpyruvate + H2O. Its pathway is carbohydrate degradation; glycolysis; pyruvate from D-glyceraldehyde 3-phosphate: step 4/5. Functionally, catalyzes the reversible conversion of 2-phosphoglycerate (2-PG) into phosphoenolpyruvate (PEP). It is essential for the degradation of carbohydrates via glycolysis. The chain is Enolase from Novosphingobium aromaticivorans (strain ATCC 700278 / DSM 12444 / CCUG 56034 / CIP 105152 / NBRC 16084 / F199).